Reading from the N-terminus, the 277-residue chain is Digeranylgeranylglyceryl phosphate synthase (277 aa).

Transmembrane regions (helical) follow at residues 16–36 (LLAGIVGVLGSIVAAGGLPEL), 40–60 (ILVFLVVFLGCAGGNTINDYF), 83–105 (AALWYSVALFATGIVLAWFINIW), 107–124 (FLLAIVAYVTMFIYAWKL), 146–166 (GAIAVGEIGLAGTLALCAFLV), 202–222 (VGALFAILTVVASFLPIKAGI), 224–244 (LGYLAMLPVDAVILYSAFLIL), and 256–276 (QILLKVSVFLAVVAFLIASLV).

Belongs to the UbiA prenyltransferase family. DGGGP synthase subfamily. Requires Mg(2+) as cofactor.

It localises to the cell membrane. It carries out the reaction sn-3-O-(geranylgeranyl)glycerol 1-phosphate + (2E,6E,10E)-geranylgeranyl diphosphate = 2,3-bis-O-(geranylgeranyl)-sn-glycerol 1-phosphate + diphosphate. It participates in membrane lipid metabolism; glycerophospholipid metabolism. Its function is as follows. Prenyltransferase that catalyzes the transfer of the geranylgeranyl moiety of geranylgeranyl diphosphate (GGPP) to the C2 hydroxyl of (S)-3-O-geranylgeranylglyceryl phosphate (GGGP). This reaction is the second ether-bond-formation step in the biosynthesis of archaeal membrane lipids. This is Digeranylgeranylglyceryl phosphate synthase from Thermococcus kodakarensis (strain ATCC BAA-918 / JCM 12380 / KOD1) (Pyrococcus kodakaraensis (strain KOD1)).